The following is a 122-amino-acid chain: Large ribosomal subunit protein uL18 (122 aa).

Residues 1–26 (MSNLSRKQQTQKRHRRLRRHLKGTAQ) form a disordered region. The span at 9 to 22 (QTQKRHRRLRRHLK) shows a compositional bias: basic residues.

This sequence belongs to the universal ribosomal protein uL18 family. In terms of assembly, part of the 50S ribosomal subunit; part of the 5S rRNA/L5/L18/L25 subcomplex. Contacts the 5S and 23S rRNAs.

This is one of the proteins that bind and probably mediate the attachment of the 5S RNA into the large ribosomal subunit, where it forms part of the central protuberance. The polypeptide is Large ribosomal subunit protein uL18 (Prochlorococcus marinus (strain MIT 9313)).